Reading from the N-terminus, the 471-residue chain is Phosphatidate cytidylyltransferase 3 (471 aa).

Residues 1–72 (MAMEKDLSPN…HRRRSSENLA (72 aa)) form a disordered region. Positions 21-35 (SYPTTPTSRMNTNNQ) are enriched in polar residues. Transmembrane regions (helical) follow at residues 97-116 (WIRTCSSLWMLGGVVFIIYM), 120-139 (YIWAMVVVIQIFMAKELFFL), 149-169 (LPGFWLLNWHFFFTAMLFVYG), 196-216 (YQMVICYFLYIAGLIWFILTL), 228-250 (YAWTHMILIVVFTQSSFTVANIF), 255-277 (WFLLPAALIAMNDVAAYFFGFYF), 293-313 (GFIGASVATIISAFIFANVLG), and 368-388 (FSLGLFASIMAPFGGFFASGF).

This sequence belongs to the CDS family. Requires Mg(2+) as cofactor.

It is found in the membrane. The catalysed reaction is a 1,2-diacyl-sn-glycero-3-phosphate + CTP + H(+) = a CDP-1,2-diacyl-sn-glycerol + diphosphate. It functions in the pathway phospholipid metabolism; CDP-diacylglycerol biosynthesis; CDP-diacylglycerol from sn-glycerol 3-phosphate: step 3/3. In terms of biological role, may be involved in the synthesis of minor phospholipids and in modulation of IP3-mediated signal transduction. This chain is Phosphatidate cytidylyltransferase 3, found in Arabidopsis thaliana (Mouse-ear cress).